The following is a 524-amino-acid chain: Unconventional prefoldin RPB5 interactor (524 aa).

Disordered stretches follow at residues 1–20, 284–320, and 335–373; these read MEAP…LRAP, SVNG…EDNS, and VRIN…ELPM. Over residues 296-307 the composition is skewed to acidic residues; it reads DDGDNNDDGGDS. Ser361 is modified (phosphoserine; by RPS6KB1). Ser431 bears the Phosphoserine mark.

It belongs to the RNA polymerase II subunit 5-mediating protein family. As to quaternary structure, homodimer. Component of the PAQosome complex which is responsible for the biogenesis of several protein complexes and which consists of R2TP complex members RUVBL1, RUVBL2, RPAP3 and PIH1D1, URI complex members PFDN2, PFDN6, PDRG1, UXT and URI1 as well as ASDURF, POLR2E and DNAAF10/WDR92. Interacts with POLR2E/RPB5, RUVBL2 and RUVBL1. Interacts with PFDN2, PFDN4 and STAP1; the interactions are phosphorylation-dependent and occur in a growth-dependent manner in the mitochondrion. Interacts with UXT. Interacts with PPP1CC; the interaction is phosphorylation-dependent and occurs in a growth factor-dependent manner. Interacts (via the middle C-terminal region) with GTF2F1 and GTF2F2. Interacts with DMAP1. Interacts with TSC1 and TSC2. Interacts with PRPF8 and EFTUD2 in a ZNHIT2-dependent manner. Post-translationally, phosphorylated. Phosphorylation occurs essentially on serine residues. Phosphorylation occurs in response to androgen treatment in prostate cancer cells in a mTOR-dependent manner. Phosphorylated; hyperhosphorylated in mitochondria in a mTORC-dependent signaling pathway. Phosphorylated at Ser-361 by RPS6KB1 in a growth factor- and rapamycin-dependent manner. S6K1-mediated mitochondrial phosphorylation at Ser-361 disrupts the URI1-PPP1CC complex in the mitochondrion, relieves PPP1CC phosphatase inhibition activity and hence engages a negative feedback diminishing RPS6KB1 kinase activity, preventing sustained S6K1-dependent signaling.

The protein localises to the nucleus. The protein resides in the cytoplasm. It localises to the mitochondrion. Its subcellular location is the cell projection. It is found in the dendrite. Its function is as follows. Involved in gene transcription regulation. Acts as a transcriptional repressor in concert with the corepressor UXT to regulate androgen receptor (AR) transcription. May act as a tumor suppressor to repress AR-mediated gene transcription and to inhibit anchorage-independent growth in prostate cancer cells. Required for cell survival in ovarian cancer cells. Together with UXT, associates with chromatin to the NKX3-1 promoter region. Plays a central role in maintaining S6K1 signaling and BAD phosphorylation under normal growth conditions thereby protecting cells from potential deleterious effects of sustained S6K1 signaling. The URI1-PPP1CC complex acts as a central component of a negative feedback mechanism that counteracts excessive S6K1 survival signaling to BAD in response to growth factors. Mediates inhibition of PPP1CC phosphatase activity in mitochondria. Coordinates the regulation of nutrient-sensitive gene expression availability in a mTOR-dependent manner. Seems to be a scaffolding protein able to assemble a prefoldin-like complex that contains PFDs and proteins with roles in transcription and ubiquitination. The protein is Unconventional prefoldin RPB5 interactor (URI1) of Bos taurus (Bovine).